Consider the following 30-residue polypeptide: Putative alpha-amylase inhibitor (30 aa).

This sequence belongs to the leguminous lectin family.

Its function is as follows. Lectin and alpha-amylase inhibitor. Acts as a defensive protein against insects. This Phaseolus vulgaris (Kidney bean) protein is Putative alpha-amylase inhibitor.